The chain runs to 495 residues: UDP-glycosyltransferase 73C12 (495 aa).

Catalysis depends on histidine 24, which acts as the Proton acceptor. Histidine 24 serves as a coordination point for an anthocyanidin. Aspartate 129 serves as the catalytic Charge relay. Residues alanine 356, glutamine 358, histidine 373, tryptophan 376, asparagine 377, serine 378, and glutamate 381 each coordinate UDP-alpha-D-glucose. Alanine 396 serves as a coordination point for an anthocyanidin. 2 residues coordinate UDP-alpha-D-glucose: aspartate 397 and glutamine 398.

This sequence belongs to the UDP-glycosyltransferase family.

The enzyme catalyses oleanolate + UDP-alpha-D-glucose = oleanolate 3-O-beta-D-glucoside + UDP + H(+). Functionally, catalyzes the transfer of a glucose (Glc) moiety from UDP-Glc to the C-3 position of the oleanane sapogenins oleanolate and hederagenin, and to the C-28 carboxylic group of the lupane sapogenin betulinate. The monoglucosylated hederagenin 3-O-beta-D-glucoside is a feeding deterrent of the yellow-striped flea beetle (Phyllotreta nemorum). The sequence is that of UDP-glycosyltransferase 73C12 from Barbarea vulgaris (Yellow rocket).